We begin with the raw amino-acid sequence, 167 residues long: SAR-endolysin (167 aa).

A helical; Signal-anchor for type II membrane protein transmembrane segment spans residues 10–32 (SVMAAISGGAIAIASVLITGPGG). Catalysis depends on proton donor/acceptor residues E37 and D46.

The protein belongs to the glycosyl hydrolase 24 family.

Its subcellular location is the host cell inner membrane. The enzyme catalyses Hydrolysis of (1-&gt;4)-beta-linkages between N-acetylmuramic acid and N-acetyl-D-glucosamine residues in a peptidoglycan and between N-acetyl-D-glucosamine residues in chitodextrins.. Signal-arrest-release (SAR) endolysin with lysozyme activity that degrades host peptidoglycans and participates with the pinholin and spanin proteins in the sequential events which lead to programmed host cell lysis releasing the mature viral particles. Once the pinholin has permeabilized the host cell membrane, the SAR-endolysin is released into the periplasm where it breaks down the peptidoglycan layer. This Bacteriophage PS119 protein is SAR-endolysin (19).